A 473-amino-acid chain; its full sequence is Ribosomal RNA small subunit methyltransferase F (473 aa).

S-adenosyl-L-methionine contacts are provided by residues 123–129 (AAAPGSK), Glu147, Asp174, and Asp192. Cys245 acts as the Nucleophile in catalysis.

Belongs to the class I-like SAM-binding methyltransferase superfamily. RsmB/NOP family.

The protein resides in the cytoplasm. The catalysed reaction is cytidine(1407) in 16S rRNA + S-adenosyl-L-methionine = 5-methylcytidine(1407) in 16S rRNA + S-adenosyl-L-homocysteine + H(+). In terms of biological role, specifically methylates the cytosine at position 1407 (m5C1407) of 16S rRNA. This chain is Ribosomal RNA small subunit methyltransferase F, found in Vibrio atlanticus (strain LGP32) (Vibrio splendidus (strain Mel32)).